The following is a 499-amino-acid chain: Probable mitochondrial-processing peptidase subunit alpha-2, chloroplastic/mitochondrial (499 aa).

The protein belongs to the peptidase M16 family. As to quaternary structure, heterodimer of alpha and beta subunits, forming the mitochondrial processing protease (MPP) in which subunit alpha is involved in substrate recognition and binding and subunit beta is the catalytic subunit. Component of the ubiquinol-cytochrome c oxidoreductase (cytochrome b-c1 complex, complex III, CIII), a multisubunit enzyme composed of 10 subunits. The complex is composed of 3 respiratory subunits cytochrome b (MT-CYB), cytochrome c1 (CYC1-1 or CYC1-2) and Rieske protein (UCR1-1 or UCR1-2), 2 core protein subunits MPPalpha1 (or MPPalpha2) and MPPB, and 5 low-molecular weight protein subunits QCR7-1 (or QCR7-2), UCRQ-1 (or UCRQ-2), QCR9, UCRY and probably QCR6-1 (or QCR6-2). The complex exists as an obligatory dimer and forms supercomplexes (SCs) in the inner mitochondrial membrane with NADH-ubiquinone oxidoreductase (complex I, CI), resulting in different assemblies (supercomplexes SCI(1)III(2) and SCI(2)III(4)). Interacts with TIM23-2.

It localises to the plastid. The protein localises to the chloroplast stroma. Its subcellular location is the mitochondrion matrix. The protein resides in the mitochondrion inner membrane. Functionally, substrate recognition and binding subunit of the essential mitochondrial processing protease (MPP), which cleaves the mitochondrial sequence off newly imported precursors proteins. In terms of biological role, component of the ubiquinol-cytochrome c oxidoreductase, a multisubunit transmembrane complex that is part of the mitochondrial electron transport chain which drives oxidative phosphorylation. The respiratory chain contains 3 multisubunit complexes succinate dehydrogenase (complex II, CII), ubiquinol-cytochrome c oxidoreductase (cytochrome b-c1 complex, complex III, CIII) and cytochrome c oxidase (complex IV, CIV), that cooperate to transfer electrons derived from NADH and succinate to molecular oxygen, creating an electrochemical gradient over the inner membrane that drives transmembrane transport and the ATP synthase. The cytochrome b-c1 complex catalyzes electron transfer from ubiquinol to cytochrome c, linking this redox reaction to translocation of protons across the mitochondrial inner membrane, with protons being carried across the membrane as hydrogens on the quinol. In the process called Q cycle, 2 protons are consumed from the matrix, 4 protons are released into the intermembrane space and 2 electrons are passed to cytochrome c. This Arabidopsis thaliana (Mouse-ear cress) protein is Probable mitochondrial-processing peptidase subunit alpha-2, chloroplastic/mitochondrial (MPPalpha2).